Here is a 232-residue protein sequence, read N- to C-terminus: Protein FAM246A (232 aa).

Disordered stretches follow at residues 1-47, 153-178, and 191-232; these read MATP…RAPG, LPPPPPSPPARREPRAVPRATPRGPT, and AASR…GGGD. Residues 19–31 show a composition bias toward basic and acidic residues; sequence EVLRRVTGRRRDP. The span at 211 to 220 shows a compositional bias: basic residues; the sequence is APVRKNHKKM.

It belongs to the FAM246 family.

The polypeptide is Protein FAM246A (Homo sapiens (Human)).